A 527-amino-acid chain; its full sequence is Inorganic phosphate transporter 1-1 (527 aa).

Residues 1–21 (MAGGQLNVLSTLDQAKTQWYH) are Cytoplasmic-facing. Residues 22 to 42 (FMAIVIAGMGFFTDAYDLFCI) form a helical membrane-spanning segment. At 43–70 (SLVTKLLGRIYYTDDSKDTPGALPPNVS) the chain is on the extracellular side. A helical membrane pass occupies residues 71-91 (AAVTGVALCGTLAGQLFFGWL). The Cytoplasmic portion of the chain corresponds to 92 to 99 (GDKLGRKS). The helical transmembrane segment at 100-120 (VYGFTLILMVVCSVASGLSFG) threads the bilayer. The Extracellular portion of the chain corresponds to 121–124 (SSAK). Residues 125-145 (GVVSTLCFFRFWLGFGIGGDY) form a helical membrane-spanning segment. Over 146–163 (PLSATIMSEYANKRTRGA) the chain is Cytoplasmic. Residues 164–184 (FIAAVFAMQGFGILFGAIVAL) form a helical membrane-spanning segment. The Extracellular portion of the chain corresponds to 185 to 211 (AVSAGFRHAYPAPSYSDNHAASLVPQA). The chain crosses the membrane as a helical span at residues 212-232 (DYVWRIILMFGTVPAALTYYW). The Cytoplasmic segment spans residues 233-292 (RMKMPETARYTALIARNAKQAAADMSKVLHTQIEESADRAETVAVGGESWGLFSRQFLRR). Residues 293–313 (HGLHLLATTSTWFLLDIAFYS) form a helical membrane-spanning segment. The Extracellular segment spans residues 314 to 348 (QNLFQKDIFSKVGWIPPAKTMNALEELYRIARAQA). The chain crosses the membrane as a helical span at residues 349 to 369 (LIALCGTIPGYWFTVAFIEIM). Topologically, residues 370–371 (GR) are cytoplasmic. Residues 372-392 (FWIQIMGFAMMTAFMLGLAIP) form a helical membrane-spanning segment. Residues 393-405 (YHHWTTPGHHTGF) lie on the Extracellular side of the membrane. Residues 406-426 (IVMYGFTFFFANFGPNSTTFI) traverse the membrane as a helical segment. Residues 427 to 442 (VPAEIYPARLRSTCHG) are Cytoplasmic-facing. The helical transmembrane segment at 443–463 (ISAAAGKAGAIIGAFGFLYAA) threads the bilayer. Over 464–481 (QDQHKPEPGYPRGIGIKN) the chain is Extracellular. Residues 482 to 502 (ALFVLAGTNFLGTIMTLLVPE) traverse the membrane as a helical segment. The Cytoplasmic segment spans residues 503-527 (SKGMSLEVISQEVADGDDEEAAYPK).

It belongs to the major facilitator superfamily. Phosphate:H(+) symporter (TC 2.A.1.9) family. As to expression, expressed in roots, stems and leaves.

It is found in the membrane. Its function is as follows. High-affinity transporter for external inorganic phosphate. Required for phosphate acquisition in plant. The chain is Inorganic phosphate transporter 1-1 (PHT1-1) from Oryza sativa subsp. japonica (Rice).